The following is a 248-amino-acid chain: Sugar fermentation stimulation protein homolog (248 aa).

This sequence belongs to the SfsA family.

The polypeptide is Sugar fermentation stimulation protein homolog (Prochlorococcus marinus subsp. pastoris (strain CCMP1986 / NIES-2087 / MED4)).